Reading from the N-terminus, the 406-residue chain is Serine hydroxymethyltransferase (406 aa).

(6S)-5,6,7,8-tetrahydrofolate is bound by residues leucine 111 and 115 to 117 (GHL). Residue lysine 220 is modified to N6-(pyridoxal phosphate)lysine. 340-342 (SAF) serves as a coordination point for (6S)-5,6,7,8-tetrahydrofolate.

This sequence belongs to the SHMT family. Homodimer. The cofactor is pyridoxal 5'-phosphate.

Its subcellular location is the cytoplasm. The enzyme catalyses (6R)-5,10-methylene-5,6,7,8-tetrahydrofolate + glycine + H2O = (6S)-5,6,7,8-tetrahydrofolate + L-serine. It participates in one-carbon metabolism; tetrahydrofolate interconversion. The protein operates within amino-acid biosynthesis; glycine biosynthesis; glycine from L-serine: step 1/1. In terms of biological role, catalyzes the reversible interconversion of serine and glycine with tetrahydrofolate (THF) serving as the one-carbon carrier. This reaction serves as the major source of one-carbon groups required for the biosynthesis of purines, thymidylate, methionine, and other important biomolecules. Also exhibits THF-independent aldolase activity toward beta-hydroxyamino acids, producing glycine and aldehydes, via a retro-aldol mechanism. The polypeptide is Serine hydroxymethyltransferase (Mycoplasma genitalium (strain ATCC 33530 / DSM 19775 / NCTC 10195 / G37) (Mycoplasmoides genitalium)).